The primary structure comprises 1021 residues: Disease resistance protein Pikm2-TS (1021 aa).

The tract at residues 1–182 (MELVVGASEA…PQIIGIKEPV (182 aa)) is structured coiled coil (CC) domain. Residues 186–519 (TVMEELEVWL…WIAEGFANEK (334 aa)) enclose the NB-ARC domain. The disordered stretch occupies residues 297 to 317 (PENDGNPDNTPIRLQETTDDD). LRR repeat units lie at residues 612 to 634 (LAQV…SFNY), 659 to 682 (MLLL…IQKL), and 683 to 705 (EYLE…IVQL). Positions 719-751 (RKGLRLPQEKSKKPIKNPSPQGKTKEPAKKGFL) are disordered. LRR repeat units lie at residues 785–807 (LTGL…TFKQ), 817–841 (SCGL…DMPA), 843–865 (PRYL…ITSI), 866–888 (TTLN…ILHI), 912–935 (KDIL…GFKS), and 957–981 (MPAL…ILEN).

It belongs to the disease resistance NB-LRR family. Constitutively expressed.

In terms of biological role, disease resistance (R) protein. Resistance proteins guard the plant against pathogens that contain an appropriate avirulence protein via an indirect interaction with this avirulence protein. That triggers a defense system including the hypersensitive response, which restricts the pathogen growth. Contribution of Pikm-1 is required to recognize the effector avirulence protein AVR-Pik. This is Disease resistance protein Pikm2-TS from Oryza sativa subsp. japonica (Rice).